Reading from the N-terminus, the 402-residue chain is Bacteriochlorophyllide c C-7(1)-hydroxylase (402 aa).

The Radical SAM core domain occupies V104–P359. [4Fe-4S] cluster is bound by residues C120, C129, and C132.

It belongs to the radical SAM superfamily. The cofactor is [4Fe-4S] cluster.

The catalysed reaction is a bacteriochlorophyllide c + 2 S-adenosyl-L-methionine + H2O = a bacteriochlorophyllide e + 2 5'-deoxyadenosine + 2 L-methionine + 2 H(+). The enzyme catalyses a bacteriochlorophyllide d + 2 S-adenosyl-L-methionine + H2O = a bacteriochlorophyllide f + 2 5'-deoxyadenosine + 2 L-methionine + 2 H(+). It participates in porphyrin-containing compound metabolism; bacteriochlorophyll biosynthesis. Its function is as follows. Involved in the biosynthesis of bacteriochlorophyll e (BChl e). Catalyzes two consecutive hydroxylation reactions of the C-7 methyl group of bacteriochlorophyllide c (BChlide c) to form a geminal diol intermediate that spontaneously dehydrates to produce the formyl group of bacteriochlorophyllide e (BChlide e). Also able to catalyze the same reaction for bacteriochlorophyllide d (BChlide d) to give rise to bacteriochlorophyllide f (BChlide f). The protein is Bacteriochlorophyllide c C-7(1)-hydroxylase of Chlorobaculum limnaeum.